Reading from the N-terminus, the 207-residue chain is GTP cyclohydrolase 1 (207 aa).

Residues cysteine 94, histidine 97, and cysteine 167 each contribute to the Zn(2+) site.

This sequence belongs to the GTP cyclohydrolase I family. In terms of assembly, toroid-shaped homodecamer, composed of two pentamers of five dimers.

The enzyme catalyses GTP + H2O = 7,8-dihydroneopterin 3'-triphosphate + formate + H(+). Its pathway is cofactor biosynthesis; 7,8-dihydroneopterin triphosphate biosynthesis; 7,8-dihydroneopterin triphosphate from GTP: step 1/1. The polypeptide is GTP cyclohydrolase 1 (Thermobifida fusca (strain YX)).